The primary structure comprises 439 residues: Protein PHYTOCHROME KINASE SUBSTRATE 1 (439 aa).

A compositionally biased stretch (polar residues) spans 1–14 (MVTLTPSSASTPKT). 3 disordered regions span residues 1–22 (MVTLTPSSASTPKTSFDFMKNN), 54–80 (KTLNMSINPKQEEFGDEKKMVKKAPED), and 100–139 (QGSSVLSLTNPEVERTVVDSKQSAKKSTGTPSVRSESSWN). The span at 63–79 (KQEEFGDEKKMVKKAPE) shows a compositional bias: basic and acidic residues. 2 stretches are compositionally biased toward polar residues: residues 100–109 (QGSSVLSLTN) and 118–139 (DSKQSAKKSTGTPSVRSESSWN). Residues Ser238 and Ser244 each carry the phosphoserine modification. Disordered regions lie at residues 259–311 (LPLP…PTCY) and 355–439 (TAKS…LYSQ). Basic and acidic residues predominate over residues 412 to 421 (TKPKSFETRR). Low complexity predominate over residues 424–439 (SNSSISHTQSSLLYSQ).

It belongs to the PKS family. In terms of assembly, interacts with PKS2, RPT3, PHOT1, PHOT2 and the C-termini of both phytochromes A (phyA) and B (phyB). Binds both spectral forms of phytochrome, Pr and Pfr. Post-translationally, phosphorylated on Ser and to a lower extent on Thr by phytochromes. Phosphorylation is stimulated twofold by red light. As to expression, expressed in young seedlings in both darkness and light. Moderate in leaves and very low in roots and flowers. Expressed in the elongation zone of the root and hypocotyl.

It is found in the cell membrane. Its function is as follows. May be responsible for light-regulated cytoplasmic sequestration of phytochromes or may be a negative regulator of phytochrome B signaling. Component of the network that modulates the very low-fluence response (VLFR) branch of phyA signaling. Acts positively in PHOT1 signaling. Regulates phytochrome-mediated photomorphogenesis and hypocotyl phototropism. Involved in the control of leaf flattening and leaf positioning. Promotes negative root phototropism and negatively regulates root gravitropism. May act by controlling auxin homeostasis. The sequence is that of Protein PHYTOCHROME KINASE SUBSTRATE 1 (PKS1) from Arabidopsis thaliana (Mouse-ear cress).